Reading from the N-terminus, the 224-residue chain is MIYREDSRRNTIGVLDLQGGVCEHLEHLERLGIACKRVKEPLDFEGVAGLILPGGESTCLSRLIRIFHLEGCILDAFQKGMKIWGTCAGAILLATGILGERPHLGLIDMDIERNGFGSQLDSFCIEAALPELSADPVPLTFIRAPKIRRVGSDVRILLQLQDYIVAAENDRVLVTVFHPELTPCIVFHKHFVHKCGICCTPEDDLADSDAQWNSRSWMRLAPHV.

55 to 57 (GES) contacts L-glutamine. The active-site Nucleophile is Cys-87. L-glutamine is bound by residues Arg-113 and 142–143 (IR). Catalysis depends on charge relay system residues His-178 and Glu-180.

This sequence belongs to the glutaminase PdxT/SNO family. In terms of assembly, in the presence of PdxS, forms a dodecamer of heterodimers. Only shows activity in the heterodimer.

It catalyses the reaction aldehydo-D-ribose 5-phosphate + D-glyceraldehyde 3-phosphate + L-glutamine = pyridoxal 5'-phosphate + L-glutamate + phosphate + 3 H2O + H(+). It carries out the reaction L-glutamine + H2O = L-glutamate + NH4(+). It functions in the pathway cofactor biosynthesis; pyridoxal 5'-phosphate biosynthesis. In terms of biological role, catalyzes the hydrolysis of glutamine to glutamate and ammonia as part of the biosynthesis of pyridoxal 5'-phosphate. The resulting ammonia molecule is channeled to the active site of PdxS. In Syntrophus aciditrophicus (strain SB), this protein is Pyridoxal 5'-phosphate synthase subunit PdxT.